Here is a 51-residue protein sequence, read N- to C-terminus: Small ribosomal subunit protein eS31 (51 aa).

Zn(2+) is bound by residues cysteine 21, cysteine 24, cysteine 39, and cysteine 42. Residues 21–42 (CPRCGPGVFLAEHEDRFSCGRC) form a C4-type zinc finger.

Belongs to the eukaryotic ribosomal protein eS31 family. Part of the 30S ribosomal subunit. Zn(2+) serves as cofactor.

This chain is Small ribosomal subunit protein eS31, found in Picrophilus torridus (strain ATCC 700027 / DSM 9790 / JCM 10055 / NBRC 100828 / KAW 2/3).